The primary structure comprises 342 residues: tRNA N6-adenosine threonylcarbamoyltransferase (342 aa).

Fe cation-binding residues include H115 and H119. Residues I137–G141, D170, G183, D187, and N276 contribute to the substrate site. D304 lines the Fe cation pocket.

The protein belongs to the KAE1 / TsaD family. Requires Fe(2+) as cofactor.

Its subcellular location is the cytoplasm. The catalysed reaction is L-threonylcarbamoyladenylate + adenosine(37) in tRNA = N(6)-L-threonylcarbamoyladenosine(37) in tRNA + AMP + H(+). Its function is as follows. Required for the formation of a threonylcarbamoyl group on adenosine at position 37 (t(6)A37) in tRNAs that read codons beginning with adenine. Is involved in the transfer of the threonylcarbamoyl moiety of threonylcarbamoyl-AMP (TC-AMP) to the N6 group of A37, together with TsaE and TsaB. TsaD likely plays a direct catalytic role in this reaction. The chain is tRNA N6-adenosine threonylcarbamoyltransferase from Staphylococcus haemolyticus (strain JCSC1435).